The chain runs to 4678 residues: E3 ubiquitin-protein ligase MYCBP2 (4678 aa).

3 disordered regions span residues 87–127, 172–192, and 609–628; these read DRDQ…RSKS, SKNS…SKEP, and ASKG…KPYK. A compositionally biased stretch (basic residues) spans 100–124; the sequence is SRNKKILNKKKLKRKQKSKSKVKTR. Ser127, Ser178, Ser181, and Ser183 each carry phosphoserine. 5 RCC1 repeats span residues 600 to 655, 699 to 755, 907 to 957, 958 to 1008, and 1010 to 1066; these read DGSI…VISK, NGEV…MMCP, KRDK…VLME, NGDV…VLLM, and GQVF…LRID. Over residues 898 to 910 the composition is skewed to basic residues; the sequence is RSHPAQLKHKRDK. The tract at residues 898–928 is disordered; the sequence is RSHPAQLKHKRDKHKDGSGERGEKDASKITT. The span at 911 to 924 shows a compositional bias: basic and acidic residues; that stretch reads HKDGSGERGEKDAS. The tract at residues 1235 to 1386 is PHR domain 1; the sequence is NRFESHGGGW…GQIPQLLYRL (152 aa). Ser1624 carries the phosphoserine modification. The segment at 1726–1884 is PHR domain 2; that stretch reads NRFTKTSQGR…GQIPQILYYR (159 aa). Cys1748 and Cys1863 form a disulfide bridge. 2 disordered regions span residues 1993–2012 and 2321–2340; these read FNPN…QGLS and QQDQ…VTAA. A compositionally biased stretch (polar residues) spans 1994–2012; that stretch reads NPNQSTDSTTGNQPEQGLS. Positions 2022–2550 are RAE1 binding; the sequence is VIESEHPYKP…NQHLGKSLLV (529 aa). The stretch at 2341–2443 is one Filamin repeat; sequence SSNTDMTYGG…IDAGLEVKVK (103 aa). At Thr2683 the chain carries Phosphothreonine. Disordered regions lie at residues 2709 to 2931, 2943 to 2963, 2979 to 3020, and 3066 to 3085; these read LGNS…LHSE, TNSL…VDEG, EQEM…EPAK, and APIR…ETKL. Polar residues predominate over residues 2718–2733; sequence NISTSSKPASTSGKSE. The span at 2742 to 2760 shows a compositional bias: basic and acidic residues; sequence LKPDGRMSRTTADQKKPRG. Ser2769 is modified (phosphoserine). The span at 2775-2785 shows a compositional bias: basic and acidic residues; the sequence is DAAKLRSDSHS. Residues 2786 to 2810 show a composition bias toward polar residues; sequence RSLSPNHNTLQTLKSDGRMPSSSRA. Phosphoserine is present on residues Ser2787, Ser2789, Ser2833, Ser2839, Ser2869, Ser2871, and Ser2920. Low complexity predominate over residues 2828–2843; sequence PANRSSPSGASSPRSS. The span at 2860 to 2871 shows a compositional bias: basic and acidic residues; that stretch reads TKLDPPRERSKS. A Phosphoserine modification is found at Ser2985. Basic residues predominate over residues 2988–3001; sequence ISRKCANRHTRPKK. Phosphoserine is present on residues Ser3090, Ser3478, and Ser3505. A disordered region spans residues 3605-3631; that stretch reads PVEPEEEEDEENKTSKENSEQEKDTRV. Residues 3616–3631 show a composition bias toward basic and acidic residues; the sequence is NKTSKENSEQEKDTRV. The 179-residue stretch at 3719–3897 folds into the DOC domain; the sequence is SISIQSGFEA…VAQQRNCEAE (179 aa). Positions 3915–3934 are disordered; that stretch reads SGDAEPTPEQEEKALLSSPE. Residue Thr3921 is modified to Phosphothreonine. Residues Ser3931 and Ser3932 each carry the phosphoserine modification. Zn(2+)-binding residues include Cys4428, Cys4431, Cys4446, His4448, His4451, Cys4454, Cys4475, Cys4478, Cys4544, and Cys4547. An RING-type; atypical zinc finger spans residues 4428–4479; that stretch reads CMICFTEALSAAPAIQLDCSHIFHLQCCRRVLENRWLGPRITFGFISCPICK. Residues 4539 to 4676 form a tandem cysteine domain region; that stretch reads YAYYVCYKCR…LGCGVCRNAH (138 aa). Residue Cys4558 is part of the active site. Residues Cys4575, Cys4578, Cys4587, His4590, Cys4599, Cys4602, and Cys4603 each contribute to the Zn(2+) site. Cys4610 is a catalytic residue. Positions 4617, 4620, 4638, 4652, 4658, 4669, and 4672 each coordinate Zn(2+).

This sequence belongs to the RING-Cys relay (RCR) family. Interacts with MYC. Interacts with TSC2 (tuberin) when TSC2 is in complex with TSC1 (hamartin). Interacts with FBXO45. Interacts with RAE1. Interacts with CPNE1 (via VWFA domain) and CPNE4 (via VWFA domain). Interacts with (sumoylated) RANGAP1; interaction with sumoylated RANGAP1 inhibits E3 ubiquitin-protein ligase activity and promotes MYCBP2 translocation to the nucleus. Interacts with RAN. Interacts with ATP13A2; the interaction inhibits the ubiquitination of TSC2 by MYCBP2. Interacts with USP11. Autoubiquitinated. Expressed in all tissues examined, expression is exceptionally abundant in brain and thymus. Colocalizes with TSC1 and TSC2 along the neurites and in the growth cones. Highly expressed in peripheral and central neurons. Colocalized with TSC1 in one of the filopodial extensions at the tip of a growth cone.

It localises to the nucleus. It is found in the cell projection. The protein resides in the axon. Its subcellular location is the cytoplasm. The protein localises to the cytoskeleton. It catalyses the reaction [E2 ubiquitin-conjugating enzyme]-S-ubiquitinyl-L-cysteine + [acceptor protein]-L-threonine = [E2 ubiquitin-conjugating enzyme]-L-cysteine + [acceptor protein]-3-O-ubiquitinyl-L-threonine.. It functions in the pathway protein modification; protein ubiquitination. In terms of biological role, atypical E3 ubiquitin-protein ligase which specifically mediates ubiquitination of threonine and serine residues on target proteins, instead of ubiquitinating lysine residues. Shows esterification activity towards both threonine and serine, with a preference for threonine, and acts via two essential catalytic cysteine residues that relay ubiquitin to its substrate via thioester intermediates. Interacts with the E2 enzymes UBE2D1, UBE2D3, UBE2E1 and UBE2L3. Plays a key role in neural development, probably by mediating ubiquitination of threonine residues on target proteins. Involved in different processes such as regulation of neurite outgrowth, synaptic growth, synaptogenesis and axon degeneration. Required for the formation of major central nervous system axon tracts. Required for proper axon growth by regulating axon navigation and axon branching: acts by regulating the subcellular location and stability of MAP3K12/DLK. Required for proper localization of retinogeniculate projections but not for eye-specific segregation. Regulates axon guidance in the olfactory system. Involved in Wallerian axon degeneration, an evolutionarily conserved process that drives the loss of damaged axons: acts by promoting destabilization of NMNAT2, probably via ubiquitination of NMNAT2. Catalyzes ubiquitination of threonine and/or serine residues on NMNAT2, consequences of threonine and/or serine ubiquitination are however unknown. Regulates the internalization of TRPV1 in peripheral sensory neurons. Mediates ubiquitination and subsequent proteasomal degradation of TSC2/tuberin. Independently of the E3 ubiquitin-protein ligase activity, also acts as a guanosine exchange factor (GEF) for RAN in neurons of dorsal root ganglia. May function as a facilitator or regulator of transcriptional activation by MYC. Acts in concert with HUWE1 to regulate the circadian clock gene expression by promoting the lithium-induced ubiquination and degradation of NR1D1. In Homo sapiens (Human), this protein is E3 ubiquitin-protein ligase MYCBP2.